The chain runs to 121 residues: UPF0102 protein BT_2236 (121 aa).

Belongs to the UPF0102 family.

This is UPF0102 protein BT_2236 from Bacteroides thetaiotaomicron (strain ATCC 29148 / DSM 2079 / JCM 5827 / CCUG 10774 / NCTC 10582 / VPI-5482 / E50).